The following is a 591-amino-acid chain: CTP synthase 1 (591 aa).

Lys-100 carries the post-translational modification N6-acetyllysine. One can recognise a Glutamine amidotransferase type-1 domain in the interval 300-554; it reads SIALVGKYTK…LASVGRLSHY (255 aa). Active-site for GATase activity residues include Cys-399, His-526, and Glu-528. Phosphoserine occurs at positions 562, 568, 571, 573, 574, 575, 578, and 587. The segment at 562 to 591 is disordered; that stretch reads SPRDTYSDRSGSSSPDSEITELKFPSINHD. A compositionally biased stretch (low complexity) spans 569-578; that stretch reads DRSGSSSPDS.

It belongs to the CTP synthase family. As to expression, widely expressed.

The protein resides in the cytoplasm. It is found in the cytosol. The catalysed reaction is UTP + L-glutamine + ATP + H2O = CTP + L-glutamate + ADP + phosphate + 2 H(+). Its pathway is pyrimidine metabolism; CTP biosynthesis via de novo pathway; CTP from UDP: step 2/2. With respect to regulation, activated by GTP and inhibited by CTP. Functionally, this enzyme is involved in the de novo synthesis of CTP, a precursor of DNA, RNA and phospholipids. Catalyzes the ATP-dependent amination of UTP to CTP with either L-glutamine or ammonia as a source of nitrogen. This enzyme and its product, CTP, play a crucial role in the proliferation of activated lymphocytes and therefore in immunity. This Homo sapiens (Human) protein is CTP synthase 1.